A 1451-amino-acid chain; its full sequence is Copper-transporting ATPase 2 (1451 aa).

The Cytoplasmic portion of the chain corresponds to 1 to 646; sequence MPEQERKVTA…KTEIKQWKKS (646 aa). 3 HMA domains span residues 57-123, 142-208, and 256-322; these read TTGV…FEAS, AVVK…FEAA, and ATLP…PGYF. The Cu(+) site is built by C68, C71, C153, C156, C267, and C270. The interval 328 to 353 is disordered; the sequence is DGLEKESGSSSVPSLGSSQRQQEPGP. The segment covering 335 to 345 has biased composition (low complexity); sequence GSSSVPSLGSS. The region spanning 355-421 is the HMA 4 domain; sequence RTAVLTITGI…AVEDMGFEVS (67 aa). 3 positions are modified to phosphoserine: S469, S471, and S474. HMA domains are found at residues 481–547 and 557–623; these read QKCF…FEAA and GDIE…FHAS. The Cu(+) site is built by C492, C495, C568, and C571. A helical membrane pass occupies residues 647–668; sequence FLCSLVFGIPVMGLMIYMLIPS. Residues 669–690 are Extracellular-facing; the sequence is SKPHETMVLDHNIIPGLSVLNL. A helical transmembrane segment spans residues 691–710; that stretch reads IFFILCTFVQFLGGWYFYVQ. Over 711–717 the chain is Cytoplasmic; it reads AYKSLRH. The helical transmembrane segment at 718–738 threads the bilayer; that stretch reads KSANMDVLIVLATTIAYAYSL. The Extracellular portion of the chain corresponds to 739–757; sequence VILVVAIAEKAEKSPVTFF. Residues 758-778 traverse the membrane as a helical segment; the sequence is DTPPMLFVFIALGRWLEHVAK. The Cytoplasmic segment spans residues 779–912; sequence SKTSEALAKL…KAPIQQLADR (134 aa). The chain crosses the membrane as a helical span at residues 913 to 935; that stretch reads FSGYFVPFIIIISTLTLVVWIII. The Extracellular segment spans residues 936 to 965; sequence GFVDFGIVQKYFPSPSKHISQTEVIIRFAF. Residues 966–987 form a helical membrane-spanning segment; sequence QTSITVLCIACPCSLGLATPTA. The Cytoplasmic segment spans residues 988-1310; sequence VMVGTGVAAQ…LSKRTVRRIR (323 aa). D1020 serves as the catalytic 4-aspartylphosphate intermediate. Mg(2+) contacts are provided by D1255 and D1259. Residues 1311-1328 traverse the membrane as a helical segment; sequence VNLVLALIYNMVGIPIAA. Residues 1329 to 1339 lie on the Extracellular side of the membrane; the sequence is GVFMPIGIVLQ. A helical transmembrane segment spans residues 1340–1357; that stretch reads PWMGSAAASSVSVVLSSL. At 1358-1451 the chain is on the cytoplasmic side; that stretch reads QLKCYRKPDL…LSDRDEEQCI (94 aa). Phosphoserine occurs at positions 1384 and 1443.

Belongs to the cation transport ATPase (P-type) (TC 3.A.3) family. Type IB subfamily. As to quaternary structure, monomer. Interacts with COMMD1/MURR1. Interacts with DCTN4, in a copper-dependent manner. Interacts with ATOX1. Interacts (via C-terminus) with ZBTB16/PLZF. As to expression, expressed in brain, liver, kidney, spleen and stomach. In brain, detected in neuronal cells of the hippocampal formation, olfactory bulbs, cerebellum, cerebral cortex and nuclei in the brainstem. Isoform PINA is expressed during night in adult pineal gland (pinealocytes) and retina. Isoform PINA is not detected in other tissue.

The protein resides in the golgi apparatus. The protein localises to the trans-Golgi network membrane. It is found in the late endosome. It catalyses the reaction Cu(+)(in) + ATP + H2O = Cu(+)(out) + ADP + phosphate + H(+). In terms of biological role, copper ion transmembrane transporter involved in the export of copper out of the cells, such as the efflux of hepatic copper into the bile. In Rattus norvegicus (Rat), this protein is Copper-transporting ATPase 2 (Atp7b).